The sequence spans 270 residues: Bis(5'-nucleosyl)-tetraphosphatase, symmetrical (270 aa).

Belongs to the Ap4A hydrolase family.

The catalysed reaction is P(1),P(4)-bis(5'-adenosyl) tetraphosphate + H2O = 2 ADP + 2 H(+). Hydrolyzes diadenosine 5',5'''-P1,P4-tetraphosphate to yield ADP. This chain is Bis(5'-nucleosyl)-tetraphosphatase, symmetrical, found in Thioalkalivibrio sulfidiphilus (strain HL-EbGR7).